We begin with the raw amino-acid sequence, 90 residues long: MGEQSFVVRVWGLVQGVGFRYFTRERALQLGLRGHAYNLEDGSVEILICGPEQSVQMMLGWLERGPRTAEVTRMEYEVAPPPKGSGFHTN.

An Acylphosphatase-like domain is found at 5-90 (SFVVRVWGLV…PPKGSGFHTN (86 aa)). Residues arginine 20 and asparagine 38 contribute to the active site.

Belongs to the acylphosphatase family.

It catalyses the reaction an acyl phosphate + H2O = a carboxylate + phosphate + H(+). This chain is Acylphosphatase (acyP), found in Aeromonas hydrophila subsp. hydrophila (strain ATCC 7966 / DSM 30187 / BCRC 13018 / CCUG 14551 / JCM 1027 / KCTC 2358 / NCIMB 9240 / NCTC 8049).